Consider the following 231-residue polypeptide: Large ribosomal subunit protein uL1 (231 aa).

This sequence belongs to the universal ribosomal protein uL1 family. As to quaternary structure, part of the 50S ribosomal subunit.

Functionally, binds directly to 23S rRNA. The L1 stalk is quite mobile in the ribosome, and is involved in E site tRNA release. Its function is as follows. Protein L1 is also a translational repressor protein, it controls the translation of the L11 operon by binding to its mRNA. In Halorhodospira halophila (strain DSM 244 / SL1) (Ectothiorhodospira halophila (strain DSM 244 / SL1)), this protein is Large ribosomal subunit protein uL1.